Here is a 206-residue protein sequence, read N- to C-terminus: Small ribosomal subunit protein uS4 (206 aa).

The 61-residue stretch at 96–156 (GRLDNVVYRM…EKAKKQSRVK (61 aa)) folds into the S4 RNA-binding domain.

The protein belongs to the universal ribosomal protein uS4 family. As to quaternary structure, part of the 30S ribosomal subunit. Contacts protein S5. The interaction surface between S4 and S5 is involved in control of translational fidelity.

One of the primary rRNA binding proteins, it binds directly to 16S rRNA where it nucleates assembly of the body of the 30S subunit. In terms of biological role, with S5 and S12 plays an important role in translational accuracy. This is Small ribosomal subunit protein uS4 from Klebsiella pneumoniae (strain 342).